Reading from the N-terminus, the 234-residue chain is LexA repressor (234 aa).

Residues 1-11 are compositionally biased toward basic and acidic residues; it reads MNEATSHEGPK. Residues 1-34 form a disordered region; it reads MNEATSHEGPKRSLPGRPPGIRADSSGLTDRQRR. Positions 52–72 form a DNA-binding region, H-T-H motif; the sequence is MREIGQAVGLSSTSSVAHQLM. Residues 83 to 94 show a composition bias toward basic and acidic residues; the sequence is DPHRPRAYEVRG. The interval 83–109 is disordered; that stretch reads DPHRPRAYEVRGSDQSSSVQPTDTAGK. Over residues 95–105 the composition is skewed to polar residues; that stretch reads SDQSSSVQPTD. Catalysis depends on for autocatalytic cleavage activity residues Ser-158 and Lys-195.

Belongs to the peptidase S24 family. In terms of assembly, homodimer.

The enzyme catalyses Hydrolysis of Ala-|-Gly bond in repressor LexA.. Represses a number of genes involved in the response to DNA damage (SOS response), including recA and lexA. In the presence of single-stranded DNA, RecA interacts with LexA causing an autocatalytic cleavage which disrupts the DNA-binding part of LexA, leading to derepression of the SOS regulon and eventually DNA repair. This chain is LexA repressor, found in Streptomyces avermitilis (strain ATCC 31267 / DSM 46492 / JCM 5070 / NBRC 14893 / NCIMB 12804 / NRRL 8165 / MA-4680).